Consider the following 99-residue polypeptide: Small ribosomal subunit protein uS17 (99 aa).

Belongs to the universal ribosomal protein uS17 family. Part of the 30S ribosomal subunit.

In terms of biological role, one of the primary rRNA binding proteins, it binds specifically to the 5'-end of 16S ribosomal RNA. The sequence is that of Small ribosomal subunit protein uS17 from Thermosipho melanesiensis (strain DSM 12029 / CIP 104789 / BI429).